The sequence spans 215 residues: Adenylate kinase (215 aa).

Residue 10-15 (GAGKGT) coordinates ATP. The interval 30–59 (STGDILRANVREGTELGLAAKEYMDKGELV) is NMP. AMP is bound by residues Thr31, Arg36, 57 to 59 (ELV), 85 to 88 (GYPR), and Gln92. The LID stretch occupies residues 126–162 (GRLMCNCGASYHRTFNPPKKDDVCDICGGKVFQRADD). Residue Arg127 coordinates ATP. Zn(2+) is bound by residues Cys130 and Cys132. 135-136 (SY) provides a ligand contact to ATP. Residues Cys149 and Cys152 each contribute to the Zn(2+) site. Residues Arg159 and Arg170 each coordinate AMP. Lys198 is a binding site for ATP.

Belongs to the adenylate kinase family. As to quaternary structure, monomer.

The protein resides in the cytoplasm. The enzyme catalyses AMP + ATP = 2 ADP. It participates in purine metabolism; AMP biosynthesis via salvage pathway; AMP from ADP: step 1/1. Functionally, catalyzes the reversible transfer of the terminal phosphate group between ATP and AMP. Plays an important role in cellular energy homeostasis and in adenine nucleotide metabolism. This is Adenylate kinase from Methanosarcina barkeri (strain Fusaro / DSM 804).